Consider the following 495-residue polypeptide: ATP synthase subunit beta, chloroplastic (495 aa).

ATP is bound at residue 172–179; it reads GGAGVGKT.

The protein belongs to the ATPase alpha/beta chains family. As to quaternary structure, F-type ATPases have 2 components, CF(1) - the catalytic core - and CF(0) - the membrane proton channel. CF(1) has five subunits: alpha(3), beta(3), gamma(1), delta(1), epsilon(1). CF(0) has four main subunits: a(1), b(1), b'(1) and c(9-12).

It is found in the plastid. It localises to the chloroplast thylakoid membrane. The enzyme catalyses ATP + H2O + 4 H(+)(in) = ADP + phosphate + 5 H(+)(out). In terms of biological role, produces ATP from ADP in the presence of a proton gradient across the membrane. The catalytic sites are hosted primarily by the beta subunits. This chain is ATP synthase subunit beta, chloroplastic, found in Scilla siberica (Siberian squill).